The sequence spans 231 residues: 7-cyano-7-deazaguanine synthase (231 aa).

8–18 serves as a coordination point for ATP; it reads FSGGQDSTTCL. Residues cysteine 188, cysteine 197, cysteine 200, and cysteine 203 each contribute to the Zn(2+) site.

Belongs to the QueC family. Zn(2+) is required as a cofactor.

It catalyses the reaction 7-carboxy-7-deazaguanine + NH4(+) + ATP = 7-cyano-7-deazaguanine + ADP + phosphate + H2O + H(+). The protein operates within purine metabolism; 7-cyano-7-deazaguanine biosynthesis. In terms of biological role, catalyzes the ATP-dependent conversion of 7-carboxy-7-deazaguanine (CDG) to 7-cyano-7-deazaguanine (preQ(0)). The chain is 7-cyano-7-deazaguanine synthase from Escherichia fergusonii (strain ATCC 35469 / DSM 13698 / CCUG 18766 / IAM 14443 / JCM 21226 / LMG 7866 / NBRC 102419 / NCTC 12128 / CDC 0568-73).